A 465-amino-acid chain; its full sequence is Sodium-dependent phosphate transport protein 1 (465 aa).

N-linked (GlcNAc...) asparagine glycans are attached at residues asparagine 47 and asparagine 56. 10 helical membrane-spanning segments follow: residues 79-99 (GIIF…VGYI), 109-129 (IGFA…AAAV), 171-191 (MSLS…GIIC), 198-218 (MVFY…FVLY), 255-275 (AMIK…YLWT), 304-324 (LPYL…DFLM), 337-357 (LFTA…LYLS), 363-383 (TITF…GALI), 399-419 (VTTL…GLFL), and 428-448 (FKIF…YLIF).

It belongs to the major facilitator superfamily. Sodium/anion cotransporter family. Interacts with PDZK1. As to expression, kidney cortex and liver.

It is found in the apical cell membrane. It carries out the reaction 3 Na(+)(out) + phosphate(out) = 3 Na(+)(in) + phosphate(in). The enzyme catalyses urate(out) = urate(in). Its function is as follows. Important for the resorption of phosphate by the kidney. May be involved in actively transporting phosphate into cells via Na(+) cotransport in the renal brush border membrane. Plays a role in urate transport in the kidney. This chain is Sodium-dependent phosphate transport protein 1 (SLC17A1), found in Oryctolagus cuniculus (Rabbit).